The following is an 83-amino-acid chain: Small ribosomal subunit protein uS17 (83 aa).

The protein belongs to the universal ribosomal protein uS17 family. In terms of assembly, part of the 30S ribosomal subunit.

Functionally, one of the primary rRNA binding proteins, it binds specifically to the 5'-end of 16S ribosomal RNA. In Nitratiruptor sp. (strain SB155-2), this protein is Small ribosomal subunit protein uS17.